Reading from the N-terminus, the 195-residue chain is Imidazoleglycerol-phosphate dehydratase (195 aa).

Belongs to the imidazoleglycerol-phosphate dehydratase family.

The protein localises to the cytoplasm. It carries out the reaction D-erythro-1-(imidazol-4-yl)glycerol 3-phosphate = 3-(imidazol-4-yl)-2-oxopropyl phosphate + H2O. It participates in amino-acid biosynthesis; L-histidine biosynthesis; L-histidine from 5-phospho-alpha-D-ribose 1-diphosphate: step 6/9. This Jannaschia sp. (strain CCS1) protein is Imidazoleglycerol-phosphate dehydratase.